We begin with the raw amino-acid sequence, 998 residues long: tRNA (34-2'-O)-methyltransferase regulator WDR6 (998 aa).

WD repeat units lie at residues 148–185, 200–239, 250–291, 294–333, 476–515, 527–566, 567–608, 664–704, 779–821, 826–865, and 868–911; these read LYYT…ESDP, AHNG…DWTT, GHSS…ILKR, QFGA…NRPK, NNRE…DDFQ, MGSN…STLR, VSQR…LLQL, RNCN…LSQR, ARLM…QLDL, DIQR…TYFQ, and LHVT…VEQK.

This sequence belongs to the WD repeat WDR6 family. Interacts with Trm7-34.

It localises to the cytoplasm. Together with methyltransferase Trm7-34, methylates the 2'-O-ribose of nucleotides at position 34 of the anticodon loop of substrate tRNAs. The protein is tRNA (34-2'-O)-methyltransferase regulator WDR6 of Drosophila melanogaster (Fruit fly).